The following is a 199-amino-acid chain: MIQISDTAKSHFLKLIQREGVPGMGVRLSAVDPGTPRADARLEFADPSELVGDEWLIDCGDFTLYVASASVAWLDGAEIDYVTQATGSQQLIIKAPKIKGQELSQVASLVERVCWVVENEINPQLASHGGRVEVQEVSAEGVVLLRFGGGCHGCGMADVTLKQGVEKTLMDRVHGVIAVRDATDHSTGAAPYISRDFSP.

The [4Fe-4S] cluster site is built by Cys-151 and Cys-154.

The protein belongs to the NfuA family. As to quaternary structure, homodimer. Requires [4Fe-4S] cluster as cofactor.

Its function is as follows. Involved in iron-sulfur cluster biogenesis. Binds a 4Fe-4S cluster, can transfer this cluster to apoproteins, and thereby intervenes in the maturation of Fe/S proteins. Could also act as a scaffold/chaperone for damaged Fe/S proteins. The protein is Fe/S biogenesis protein NfuA of Xylella fastidiosa (strain M23).